The sequence spans 284 residues: Bifunctional protein FolD (284 aa).

NADP(+) contacts are provided by residues 166–168 and I232; that span reads GAS.

It belongs to the tetrahydrofolate dehydrogenase/cyclohydrolase family. Homodimer.

The catalysed reaction is (6R)-5,10-methylene-5,6,7,8-tetrahydrofolate + NADP(+) = (6R)-5,10-methenyltetrahydrofolate + NADPH. It carries out the reaction (6R)-5,10-methenyltetrahydrofolate + H2O = (6R)-10-formyltetrahydrofolate + H(+). It participates in one-carbon metabolism; tetrahydrofolate interconversion. Functionally, catalyzes the oxidation of 5,10-methylenetetrahydrofolate to 5,10-methenyltetrahydrofolate and then the hydrolysis of 5,10-methenyltetrahydrofolate to 10-formyltetrahydrofolate. This chain is Bifunctional protein FolD, found in Pseudomonas aeruginosa (strain LESB58).